We begin with the raw amino-acid sequence, 303 residues long: Glutamyl-Q tRNA(Asp) synthetase (303 aa).

Residues 9 to 13 (RFAPS) and Glu-45 contribute to the L-glutamate site. Residues 12–22 (PSPTGAMHLGN) carry the 'HIGH' region motif. Residues Cys-100, Cys-102, Tyr-125, and Cys-129 each coordinate Zn(2+). 2 residues coordinate L-glutamate: Tyr-184 and Arg-202. The 'KMSKS' region signature appears at 240-244 (RLAKR). Lys-243 serves as a coordination point for ATP.

It belongs to the class-I aminoacyl-tRNA synthetase family. GluQ subfamily. The cofactor is Zn(2+).

Its function is as follows. Catalyzes the tRNA-independent activation of glutamate in presence of ATP and the subsequent transfer of glutamate onto a tRNA(Asp). Glutamate is transferred on the 2-amino-5-(4,5-dihydroxy-2-cyclopenten-1-yl) moiety of the queuosine in the wobble position of the QUC anticodon. The chain is Glutamyl-Q tRNA(Asp) synthetase from Deinococcus geothermalis (strain DSM 11300 / CIP 105573 / AG-3a).